We begin with the raw amino-acid sequence, 360 residues long: Lipid-A-disaccharide synthase (360 aa).

It belongs to the LpxB family.

The enzyme catalyses a lipid X + a UDP-2-N,3-O-bis[(3R)-3-hydroxyacyl]-alpha-D-glucosamine = a lipid A disaccharide + UDP + H(+). The protein operates within bacterial outer membrane biogenesis; LPS lipid A biosynthesis. Its function is as follows. Condensation of UDP-2,3-diacylglucosamine and 2,3-diacylglucosamine-1-phosphate to form lipid A disaccharide, a precursor of lipid A, a phosphorylated glycolipid that anchors the lipopolysaccharide to the outer membrane of the cell. The protein is Lipid-A-disaccharide synthase of Helicobacter pylori (strain Shi470).